Reading from the N-terminus, the 113-residue chain is Large ribosomal subunit protein bL17 (113 aa).

The protein belongs to the bacterial ribosomal protein bL17 family. As to quaternary structure, part of the 50S ribosomal subunit. Contacts protein L32.

This Clostridium beijerinckii (strain ATCC 51743 / NCIMB 8052) (Clostridium acetobutylicum) protein is Large ribosomal subunit protein bL17.